Here is a 290-residue protein sequence, read N- to C-terminus: tRNA(Ile)-lysidine synthase (290 aa).

12–17 lines the ATP pocket; the sequence is SGGSDS.

Belongs to the tRNA(Ile)-lysidine synthase family.

Its subcellular location is the cytoplasm. The enzyme catalyses cytidine(34) in tRNA(Ile2) + L-lysine + ATP = lysidine(34) in tRNA(Ile2) + AMP + diphosphate + H(+). Functionally, ligates lysine onto the cytidine present at position 34 of the AUA codon-specific tRNA(Ile) that contains the anticodon CAU, in an ATP-dependent manner. Cytidine is converted to lysidine, thus changing the amino acid specificity of the tRNA from methionine to isoleucine. In Mycoplasma genitalium (strain ATCC 33530 / DSM 19775 / NCTC 10195 / G37) (Mycoplasmoides genitalium), this protein is tRNA(Ile)-lysidine synthase.